Reading from the N-terminus, the 240-residue chain is tRNA1(Val) (adenine(37)-N6)-methyltransferase (240 aa).

The protein belongs to the methyltransferase superfamily. tRNA (adenine-N(6)-)-methyltransferase family.

Its subcellular location is the cytoplasm. The enzyme catalyses adenosine(37) in tRNA1(Val) + S-adenosyl-L-methionine = N(6)-methyladenosine(37) in tRNA1(Val) + S-adenosyl-L-homocysteine + H(+). Functionally, specifically methylates the adenine in position 37 of tRNA(1)(Val) (anticodon cmo5UAC). This Christiangramia forsetii (strain DSM 17595 / CGMCC 1.15422 / KT0803) (Gramella forsetii) protein is tRNA1(Val) (adenine(37)-N6)-methyltransferase.